Consider the following 662-residue polypeptide: DNA ligase (662 aa).

NAD(+) contacts are provided by residues 31-35, 80-81, and E109; these read DYEYD and SL. K111 serves as the catalytic N6-AMP-lysine intermediate. R132, E166, K282, and K306 together coordinate NAD(+). Zn(2+) contacts are provided by C400, C403, C418, and C423. The BRCT domain maps to 581–662; that stretch reads KVSNIFEGKT…FEEMLKGENI (82 aa).

This sequence belongs to the NAD-dependent DNA ligase family. LigA subfamily. Requires Mg(2+) as cofactor. It depends on Mn(2+) as a cofactor.

It carries out the reaction NAD(+) + (deoxyribonucleotide)n-3'-hydroxyl + 5'-phospho-(deoxyribonucleotide)m = (deoxyribonucleotide)n+m + AMP + beta-nicotinamide D-nucleotide.. Functionally, DNA ligase that catalyzes the formation of phosphodiester linkages between 5'-phosphoryl and 3'-hydroxyl groups in double-stranded DNA using NAD as a coenzyme and as the energy source for the reaction. It is essential for DNA replication and repair of damaged DNA. The chain is DNA ligase from Thermoanaerobacter sp. (strain X514).